A 357-amino-acid chain; its full sequence is MPRRDRNMDSAPCMWMRGGTSKGGYFLRADLPADTAARDAFLLAVMGSPDPRQIDGMGGADPLTSKVAVVSKSERPGIDVDYLFLQVFVDQAIVTDAQNCGNILAGVGPFAIERGLVAASGDETRVAIFMENTGQVAVATVRTPGGSVTYAGDAAIDGVPGTHAPIPTEFRDTAGSSCGALLPSGNAVDVVNGLPVTLIDNGMPCVVMKAADVGITGYEDRDSLDANAELKAKIEAIRLAVGELMNLGDVTEKSVPKMMLVAPPRDGGAVCVRSFIPHRAHATIGVLGAVSVATACLIPGSPAAEVAVVPEGARKTLSIEHPTGEMSCVLEVDDAGNVVSAALLRTARKLMDGVVFV.

It belongs to the PrpF family.

It carries out the reaction (1E)-4-oxobut-1-ene-1,2,4-tricarboxylate = (3Z)-2-oxo-4-carboxy-3-hexenedioate. It participates in secondary metabolite metabolism; lignin degradation. Contributes to the degradation of lignin at the level of the protocatechuate 4,5-cleavage pathway. Catalyzes the isomerization of the double bond between C4 and C5 in (4E)-oxalomesaconate (OMA) to (3Z)-2-keto-4-carboxy-3-hexenedioate (KCH), where the double bond has migrated between C3 and C4 via a 1,3-allylic isomerization. The chain is (4E)-oxalomesaconate Delta-isomerase from Novosphingobium sp. (strain KA1) (Sphingomonas sp. (strain KA1)).